Reading from the N-terminus, the 55-residue chain is Large ribosomal subunit protein bL33 (55 aa).

This sequence belongs to the bacterial ribosomal protein bL33 family.

This Sinorhizobium medicae (strain WSM419) (Ensifer medicae) protein is Large ribosomal subunit protein bL33.